The primary structure comprises 254 residues: MSDPRHIAIIMDGNGRWAKARGLPRSAGHRAGVEALREIVRAAGDRGLGYLTLFAFSSENWTRPSGEVSDLLGLLKLFIRRDLAELHRNNVRVNIIGERAELAANIRALLNEAESLTHRNTGLNLVIAFNYGSRDEIVRAVRSLARDVAAGLLDPSSISAELVSANLDTAGIPDPDLIIRTSGEMRLSNFLLWQAAYSEFLFLPCHWPDFRPADLDAAYETFRQRERRFGGVEPRASADAEEEILCPSTKGAAV.

Residue Asp12 is part of the active site. Asp12 lines the Mg(2+) pocket. Substrate contacts are provided by residues Gly13–Arg16, Trp17, Arg25, His29, and Ser57–Glu59. Asn60 (proton acceptor) is an active-site residue. Residues Trp61, Arg63, Arg180, and Arg186–Ser188 each bind substrate. Mg(2+) is bound at residue Glu199.

Belongs to the UPP synthase family. In terms of assembly, homodimer. Mg(2+) is required as a cofactor.

Functionally, catalyzes the condensation of isopentenyl diphosphate (IPP) with allylic pyrophosphates generating different type of terpenoids. In Brucella abortus biovar 1 (strain 9-941), this protein is Isoprenyl transferase.